Reading from the N-terminus, the 41-residue chain is Photosystem I reaction center subunit IX (41 aa).

Residues 7-27 (YLSTAPVVATGWFIVTAALLI) form a helical membrane-spanning segment.

Belongs to the PsaJ family.

It is found in the plastid. Its subcellular location is the chloroplast thylakoid membrane. Functionally, may help in the organization of the PsaE and PsaF subunits. This Tetradesmus obliquus (Green alga) protein is Photosystem I reaction center subunit IX.